We begin with the raw amino-acid sequence, 481 residues long: 3-isopropylmalate dehydratase large subunit (481 aa).

[4Fe-4S] cluster-binding residues include Cys363, Cys423, and Cys426. A disordered region spans residues 437-463; it reads GQRAASTSNRNFEGRQGRGGRTHLVSP.

The protein belongs to the aconitase/IPM isomerase family. LeuC type 1 subfamily. Heterodimer of LeuC and LeuD. [4Fe-4S] cluster serves as cofactor.

The enzyme catalyses (2R,3S)-3-isopropylmalate = (2S)-2-isopropylmalate. Its pathway is amino-acid biosynthesis; L-leucine biosynthesis; L-leucine from 3-methyl-2-oxobutanoate: step 2/4. Functionally, catalyzes the isomerization between 2-isopropylmalate and 3-isopropylmalate, via the formation of 2-isopropylmaleate. The chain is 3-isopropylmalate dehydratase large subunit from Salinispora arenicola (strain CNS-205).